Here is a 333-residue protein sequence, read N- to C-terminus: 5-formaminoimidazole-4-carboxamide-1-(beta)-D-ribofuranosyl 5'-monophosphate synthetase (333 aa).

2 residues coordinate 5-amino-1-(5-phospho-beta-D-ribosyl)imidazole-4-carboxamide: His21 and Ser84. The ATP-grasp domain occupies 118–313; that stretch reads MELLAAAGIP…YFDEPMDMGE (196 aa). ATP is bound by residues 141-187 and Glu209; that span reads PVIV…VPAY. 5-amino-1-(5-phospho-beta-D-ribosyl)imidazole-4-carboxamide is bound at residue Asn229. Residues Glu268 and Glu281 each coordinate Mg(2+).

This sequence belongs to the phosphohexose mutase family. The cofactor is Mg(2+). Mn(2+) is required as a cofactor.

It catalyses the reaction 5-amino-1-(5-phospho-beta-D-ribosyl)imidazole-4-carboxamide + formate + ATP = 5-formamido-1-(5-phospho-D-ribosyl)imidazole-4-carboxamide + ADP + phosphate. The protein operates within purine metabolism; IMP biosynthesis via de novo pathway; 5-formamido-1-(5-phospho-D-ribosyl)imidazole-4-carboxamide from 5-amino-1-(5-phospho-D-ribosyl)imidazole-4-carboxamide (formate route): step 1/1. Functionally, catalyzes the ATP- and formate-dependent formylation of 5-aminoimidazole-4-carboxamide-1-beta-d-ribofuranosyl 5'-monophosphate (AICAR) to 5-formaminoimidazole-4-carboxamide-1-beta-d-ribofuranosyl 5'-monophosphate (FAICAR) in the absence of folates. This Pyrobaculum calidifontis (strain DSM 21063 / JCM 11548 / VA1) protein is 5-formaminoimidazole-4-carboxamide-1-(beta)-D-ribofuranosyl 5'-monophosphate synthetase.